Consider the following 1705-residue polypeptide: Receptor-type tyrosine-protein phosphatase V (1705 aa).

Positions 1–18 (MRPLILLAALLWLQDSLA) are cleaved as a signal peptide. Residues 19–1077 (QEDVCSSLDG…QASISLVAMP (1059 aa)) are Extracellular-facing. Residues 24 to 44 (SSLDGSPDRQGGGPPLSVSVT) form a disordered region. 10 consecutive Fibronectin type-III domains span residues 37-129 (PPLS…TAPT), 130-222 (VVRG…VPPD), 218-305 (PVPP…EWTY), 306-388 (PSYP…SIWL), 393-454 (ARPM…HYRV), 475-569 (PPQS…APPT), 565-654 (PAPP…TGWT), 655-749 (PPSA…TPNE), 744-831 (PLTP…VLSV), and 832-926 (EPGP…SAEV). N-linked (GlcNAc...) asparagine glycosylation is found at N74, N89, N117, N174, N239, N259, N299, N345, N431, N551, N570, N620, N649, N663, and N737. 4 N-linked (GlcNAc...) asparagine glycosylation sites follow: N851, N882, N970, and N982. Residues 1078 to 1100 (LTVMMGTVVGCIIIVCAVLCLLC) traverse the membrane as a helical segment. Residues 1101 to 1705 (RRGLKGPRSE…LRNRLPRARK (605 aa)) are Cytoplasmic-facing. Tyrosine-protein phosphatase domains lie at 1150–1409 (FFQE…LLNK) and 1427–1695 (NFAQ…LNSA). Residues D1316, 1350–1356 (CSAGVGR), and Q1394 each bind substrate. C1350 functions as the Phosphocysteine intermediate in the catalytic mechanism.

The protein belongs to the protein-tyrosine phosphatase family. Receptor class 3 subfamily.

It localises to the membrane. It catalyses the reaction O-phospho-L-tyrosyl-[protein] + H2O = L-tyrosyl-[protein] + phosphate. Functionally, protein tyrosine phosphatase that acts as a regulator of energy metabolism by mediating dephosphorylation of insulin receptor (Insr). Prevents decarboxylation of osteocalcin (Bglap and Bglap2) via an indirect mechanism: dephosphorylation of insulin receptor prevents insulin signaling-dependent decarboxylation of osteocalcin, preventing the hormone activity of osteocalcin. May play a role in the maintenance of pluripotency. The polypeptide is Receptor-type tyrosine-protein phosphatase V (Ptprv) (Mus musculus (Mouse)).